A 633-amino-acid polypeptide reads, in one-letter code: DNA topoisomerase 4 subunit B (633 aa).

ATP contacts are provided by residues Tyr-5, Asn-45, Asp-72, Gly-113–Ala-119, and Lys-337. A Toprim domain is found at Lys-419–Pro-534. Positions 425, 499, and 501 each coordinate Mg(2+).

This sequence belongs to the type II topoisomerase family. ParE type 2 subfamily. As to quaternary structure, heterotetramer composed of ParC and ParE. Mg(2+) is required as a cofactor. It depends on Mn(2+) as a cofactor. Requires Ca(2+) as cofactor.

It carries out the reaction ATP-dependent breakage, passage and rejoining of double-stranded DNA.. Functionally, topoisomerase IV is essential for chromosome segregation. It relaxes supercoiled DNA. Performs the decatenation events required during the replication of a circular DNA molecule. This chain is DNA topoisomerase 4 subunit B, found in Mycoplasma genitalium (strain ATCC 33530 / DSM 19775 / NCTC 10195 / G37) (Mycoplasmoides genitalium).